Here is a 143-residue protein sequence, read N- to C-terminus: Small ribosomal subunit protein uS11c (143 aa).

Belongs to the universal ribosomal protein uS11 family. As to quaternary structure, part of the 30S ribosomal subunit.

The protein localises to the plastid. It is found in the chloroplast. This is Small ribosomal subunit protein uS11c from Brachypodium distachyon (Purple false brome).